Reading from the N-terminus, the 674-residue chain is DNA ligase (674 aa).

NAD(+) contacts are provided by residues 42–46 (DNVYD), 91–92 (SM), and E121. Residue K123 is the N6-AMP-lysine intermediate of the active site. 4 residues coordinate NAD(+): R144, E178, K294, and K318. Zn(2+) contacts are provided by C412, C415, C430, and C435. The 79-residue stretch at 596-674 (VKDSFVAGKT…ETELLANLKD (79 aa)) folds into the BRCT domain.

The protein belongs to the NAD-dependent DNA ligase family. LigA subfamily. Requires Mg(2+) as cofactor. It depends on Mn(2+) as a cofactor.

The enzyme catalyses NAD(+) + (deoxyribonucleotide)n-3'-hydroxyl + 5'-phospho-(deoxyribonucleotide)m = (deoxyribonucleotide)n+m + AMP + beta-nicotinamide D-nucleotide.. Its function is as follows. DNA ligase that catalyzes the formation of phosphodiester linkages between 5'-phosphoryl and 3'-hydroxyl groups in double-stranded DNA using NAD as a coenzyme and as the energy source for the reaction. It is essential for DNA replication and repair of damaged DNA. The protein is DNA ligase of Lacticaseibacillus casei (strain BL23) (Lactobacillus casei).